The primary structure comprises 233 residues: B-cell lymphoma/leukemia 10 (233 aa).

Methionine 1 bears the N-acetylmethionine mark. Positions 13–101 constitute a CARD domain; it reads LTEVKKDALE…QNFLIQKITD (89 aa). Glycyl lysine isopeptide (Lys-Gly) (interchain with G-Cter in ubiquitin) cross-links involve residues lysine 17, lysine 31, and lysine 63. Residue serine 138 is modified to Phosphoserine. The tract at residues 187–233 is disordered; it reads FSSTTLPRPGDPGAPPLPPDLQLEEEGTCANSSEMFLPLRSRTVSRQ. The segment covering 195-205 has biased composition (pro residues); that stretch reads PGDPGAPPLPP.

Homomultimer; homooligomerized following recruitment by CARD domain-containing proteins that form a nucleating helical template that recruits BCL10 via CARD-CARD interaction. Self-associates by CARD-CARD interaction and interacts with other CARD-proteins such as CARD9, CARD10, CARD11 and CARD14. Forms a complex with CARD14 and MALT1; resulting in the formation of a CBM (CARD14-BCL10-MALT1) complex. Forms a complex with CARD11 and MALT1; resulting in the formation of a CBM (CARD11-BCL10-MALT1) complex. Forms a complex with CARD9 and MALT1; resulting in the formation of a CBM (CARD9-BCL10-MALT1) complex. Found in a membrane raft complex, at least composed of BCL10, CARD11, DPP4 and IKBKB. Binds caspase-9 with its C-terminal domain. Interacts with TRAF2 and BIRC2/c-IAP2. Interacts with PELI2 and SOCS3; these interactions may be mutually exclusive. Post-translationally, phosphorylated. Phosphorylation results in dissociation from TRAF2 and binding to BIRC2/c-IAP2. Phosphorylated by IKBKB/IKKB. Ubiquitinated via both 'Lys-63'-linked and linear ('Met-1'-linked) polyubiquitin chains in response to T-cell receptor (TCR) activation. Ubiquitination is recognized by IKBKG/NEMO, the regulatory subunit of I-kappa-B kinase (IKK), and is required for TCR-induced NF-kappa-B activation. Linear ubiquitination at Lys-17, Lys-31 and Lys-63 is mediated by RNF31/HOIP; linear ubiquitination is recognized with much higher affinity than 'Lys-63'-linked ubiquitin by IKBKG/NEMO. CARD11 is required for linear ubiquitination by HOIP by promoting the targeting of BCL10 to RNF31/HOIP. In terms of processing, proteolytically cleaved by MALT1; required for T-cell activation. In terms of tissue distribution, ubiquitous.

It localises to the cytoplasm. Its subcellular location is the perinuclear region. It is found in the membrane raft. Functionally, plays a key role in both adaptive and innate immune signaling by bridging CARD domain-containing proteins to immune activation. Acts by channeling adaptive and innate immune signaling downstream of CARD domain-containing proteins CARD9, CARD11 and CARD14 to activate NF-kappa-B and MAP kinase p38 (MAPK11, MAPK12, MAPK13 and/or MAPK14) pathways which stimulate expression of genes encoding pro-inflammatory cytokines and chemokines. Recruited by activated CARD domain-containing proteins: homooligomerized CARD domain-containing proteins form a nucleating helical template that recruits BCL10 via CARD-CARD interaction, thereby promoting polymerization of BCL10, subsequent recruitment of MALT1 and formation of a CBM complex. This leads to activation of NF-kappa-B and MAP kinase p38 (MAPK11, MAPK12, MAPK13 and/or MAPK14) pathways which stimulate expression of genes encoding pro-inflammatory cytokines and chemokines. Activated by CARD9 downstream of C-type lectin receptors; CARD9-mediated signals are essential for antifungal immunity. Activated by CARD11 downstream of T-cell receptor (TCR) and B-cell receptor (BCR). Promotes apoptosis, pro-caspase-9 maturation and activation of NF-kappa-B via NIK and IKK. The chain is B-cell lymphoma/leukemia 10 from Homo sapiens (Human).